The chain runs to 223 residues: Ethylene-inducing xylanase (223 aa).

The first 19 residues, 1–19 (MVSFTTLLAGFVAVTGVLS), serve as a signal peptide directing secretion. Residues 34–223 (QTIGPGTGFN…SSGNANINVS (190 aa)) enclose the GH11 domain. Asparagine 94 carries N-linked (GlcNAc...) asparagine glycosylation. The Nucleophile role is filled by glutamate 119. Catalysis depends on glutamate 210, which acts as the Proton donor.

The protein belongs to the glycosyl hydrolase 11 (cellulase G) family. As to quaternary structure, interactc with tomato LeEix2 receptor to trigger its internalization.

Its subcellular location is the secreted. It carries out the reaction Endohydrolysis of (1-&gt;4)-beta-D-xylosidic linkages in xylans.. Its pathway is glycan degradation; xylan degradation. Endo-1,4-beta-xylanase involved in the hydrolysis of xylan, a major structural heterogeneous polysaccharide found in plant biomass representing the second most abundant polysaccharide in the biosphere, after cellulose. Acts as an elicitor of plant defense responses in hosts such as tobacco (Nicotiana tabacum) or tomato (Solanum lycopersicum). Induces the production of ethylene and leads alterations in membrane function with rapid efflux of potassium, uptake of calcium, alkalization of the medium, increased leakage of cellular components and necrosis in plant hosts. EIX is translocated through the xylem of the host plant to the leaf mesophyll, leading to host response to pathogen-derived extracellular proteins in tissues distant from the invading pathogen. Greatly enhances the expression of two calcineurin B-like proteins-interacting protein kinases (CIPKs) family members, OsCIPK14 and OsCIPK15, in rice cultured cells. In tomato, triggers the defense response via binding to and subsequent internalization of the LeEix2 receptor. This Hypocrea rufa (Trichoderma viride) protein is Ethylene-inducing xylanase.